A 121-amino-acid chain; its full sequence is Colipase-like protein 1 (121 aa).

A signal peptide spans 1 to 23; the sequence is MMLPQWLLLLFLLFFFLFLLTRG. 5 cysteine pairs are disulfide-bonded: Cys39-Cys50, Cys45-Cys61, Cys49-Cys83, Cys71-Cys91, and Cys85-Cys107.

Belongs to the colipase family. Exclusively expressed in epididymis, in the corpus region.

Its subcellular location is the secreted. The polypeptide is Colipase-like protein 1 (CLPSL1) (Homo sapiens (Human)).